We begin with the raw amino-acid sequence, 522 residues long: Target of rapamycin complex 2 subunit MAPKAP1 (522 aa).

An N-acetylalanine modification is found at Ala2. The segment at 2 to 184 (AFLDNPTIIL…KKIDVYLPLH (183 aa)) is interaction with MAP3K2. Residues 2–267 (AFLDNPTIIL…GFSTLALVEK (266 aa)) are interaction with NBN. The interval 38–59 (LEKTHPPSVPGDSGSEVQGSSG) is disordered. Thr86 is subject to Phosphothreonine. A phosphoserine mark is found at Ser128, Ser186, Ser315, and Ser356. The CRIM domain occupies 139–267 (QSILSVRLEQ…GFSTLALVEK (129 aa)). Positions 279-353 (LFVRINAAHG…QNAWEFCLVR (75 aa)) are SIN1-type RBD. The 106-residue stretch at 382–487 (HYKSFKVSMI…IVLKVNYILE (106 aa)) folds into the SIN1-type PH domain. Position 393 (Arg393) interacts with a 1,2-diacyl-sn-glycero-3-phospho-(1D-myo-inositol-3,4,5-trisphosphate). Position 398 is a phosphothreonine (Thr398). The a 1,2-diacyl-sn-glycero-3-phospho-(1D-myo-inositol-3,4,5-trisphosphate) site is built by Lys428 and Lys464. The tract at residues 468–522 (FESDAATVSEIVLKVNYILESRASTARADYFAQKQRKLNRRTSFSFQKEKKSGQQ) is interaction with ATF2. The residue at position 510 (Ser510) is a Phosphoserine.

It belongs to the SIN1 family. As to quaternary structure, component of the mechanistic target of rapamycin complex 2 (mTORC2), consisting in two heterotretramers composed of MTOR, MLST8, RICTOR and MAPKAP1/SIN1. The mTORC2 core complex associates with PRR5/PROTOR1 and/or PRR5L/PROTOR2. Contrary to mTORC1, mTORC2 does not bind to and is not sensitive to FKBP12-rapamycin. Interacts with MAP3K2. Interacts with ATF2. Interacts with MAPK8. Interacts with GTP-bound HRAS and KRAS; inhibiting their activity. Interacts with IFNAR2. Phosphorylation at Ser-128 by PKC promotes relocalization to the perinuclear region, where the mTORC2 complex specifically mediates phosphorylation of SGK1. Phosphorylated at Thr-86 by AKT1 or RPS6KB1 in the presence of growth factors; the effect of this phosphorylation is however unclear. According to two studies, phosphorylation at Thr-86 by AKT1 is part of a positive feedback loop that increases mTORC2 activation. According to another study, phosphorylation at Thr-86 and Thr-398 by RPS6KB1 promotes dissociation from the mTORC2 complex, leading to inhibit mTORC2 signaling.

The protein resides in the cell membrane. The protein localises to the endoplasmic reticulum membrane. It localises to the early endosome membrane. Its subcellular location is the late endosome membrane. It is found in the lysosome membrane. The protein resides in the golgi apparatus membrane. The protein localises to the mitochondrion outer membrane. It localises to the cytoplasm. Its subcellular location is the perinuclear region. It is found in the nucleus. Phosphatidylinositol 3,4,5-trisphosphate (PI(3,4,5)P3) promotes MTOR activation by relieving MAPKAP1/SIN1-mediated inhibition of MTOR that takes place in absence of PI(3,4,5)P3. Component of the mechanistic target of rapamycin complex 2 (mTORC2), which transduces signals from growth factors to pathways involved in proliferation, cytoskeletal organization, lipogenesis and anabolic output. In response to growth factors, mTORC2 phosphorylates and activates AGC protein kinase family members, including AKT (AKT1, AKT2 and AKT3), PKC (PRKCA, PRKCB and PRKCE) and SGK1. In contrast to mTORC1, mTORC2 is nutrient-insensitive. Within the mTORC2 complex, MAPKAP1/SIN1 acts as a substrate adapter which recognizes and binds AGC protein kinase family members for phosphorylation by MTOR. mTORC2 plays a critical role in AKT1 activation by mediating phosphorylation of different sites depending on the context, such as 'Thr-450', 'Ser-473', 'Ser-477' or 'Thr-479', facilitating the phosphorylation of the activation loop of AKT1 on 'Thr-308' by PDPK1/PDK1 which is a prerequisite for full activation. mTORC2 catalyzes the phosphorylation of SGK1 at 'Ser-422' and of PRKCA on 'Ser-657'. The mTORC2 complex also phosphorylates various proteins involved in insulin signaling, such as FBXW8 and IGF2BP1. mTORC2 acts upstream of Rho GTPases to regulate the actin cytoskeleton, probably by activating one or more Rho-type guanine nucleotide exchange factors. mTORC2 promotes the serum-induced formation of stress-fibers or F-actin. MAPKAP1 inhibits MAP3K2 by preventing its dimerization and autophosphorylation. Inhibits HRAS and KRAS independently of mTORC2 complex. Enhances osmotic stress-induced phosphorylation of ATF2 and ATF2-mediated transcription. Involved in ciliogenesis, regulates cilia length through its interaction with CCDC28B independently of mTORC2 complex. This chain is Target of rapamycin complex 2 subunit MAPKAP1, found in Rattus norvegicus (Rat).